The following is a 99-amino-acid chain: Acylphosphatase (99 aa).

Positions 5–97 (ILQVMIRGRV…RAGEKFSVLP (93 aa)) constitute an Acylphosphatase-like domain. Residues Arg20 and Asn38 contribute to the active site.

The protein belongs to the acylphosphatase family.

The enzyme catalyses an acyl phosphate + H2O = a carboxylate + phosphate + H(+). This is Acylphosphatase (acyP) from Bradyrhizobium diazoefficiens (strain JCM 10833 / BCRC 13528 / IAM 13628 / NBRC 14792 / USDA 110).